Reading from the N-terminus, the 352-residue chain is C-C chemokine receptor type 5 (352 aa).

Residues 1 to 30 (MVYQVSSPTYDIDYYTSEPCQKINVKQIAA) are Extracellular-facing. Position 3 is a sulfotyrosine (tyrosine 3). O-linked (GalNAc...) serine glycosylation is found at serine 6 and serine 7. Tyrosine 10, tyrosine 14, and tyrosine 15 each carry sulfotyrosine. 2 disulfides stabilise this stretch: cysteine 20–cysteine 269 and cysteine 101–cysteine 178. A helical membrane pass occupies residues 31 to 58 (RLLPPLYSLVFIFGFVGNILVVLILINC). At 59-68 (KRLKSMTDIY) the chain is on the cytoplasmic side. Residues 69 to 89 (LLNLAISDLLFLLTIPFWAHY) traverse the membrane as a helical segment. The Extracellular segment spans residues 90-102 (AAAQWDFGNTMCQ). Residues 103–124 (LLTGLYLIGFFSGIFFIILLTI) form a helical membrane-spanning segment. Residues 125-141 (DRYLAIVHAVFALKART) lie on the Cytoplasmic side of the membrane. A helical transmembrane segment spans residues 142–166 (VTFGLVTSVITWVVAVFASLPGIIF). Over 167–198 (TRSQREGLHYTCSSHFPSSQYQFWKNFQTLKI) the chain is Extracellular. A helical membrane pass occupies residues 199 to 218 (VILGLVLPLLVMVICYSGIL). At 219–235 (KTLLRCRNEKKRHRAVR) the chain is on the cytoplasmic side. Residues 236–260 (LIFTIMIVYFLFWAPYNIVLLLNTF) form a helical membrane-spanning segment. The Extracellular portion of the chain corresponds to 261 to 277 (QEFFGLNNCSSSNRLDQ). Residues 278-301 (AMQVTETLGMTHCCINPIIYAFVG) form a helical membrane-spanning segment. Residues 302-352 (EKFRNYLLVFFQKHLAKRFCKCCSISQQEAPERASSVYTRSTGEQETTVGL) lie on the Cytoplasmic side of the membrane. Residues cysteine 321, cysteine 323, and cysteine 324 are each lipidated (S-palmitoyl cysteine). Phosphoserine; by BARK1 occurs at positions 336, 337, and 342.

It belongs to the G-protein coupled receptor 1 family. In terms of assembly, interacts with PRAF2. Efficient ligand binding to CCL3/MIP-1alpha and CCL4/MIP-1beta requires sulfation, O-glycosylation and sialic acid modifications. Glycosylation on Ser-6 is required for efficient binding of CCL4. Interacts with GRK2. Interacts with ARRB1 and ARRB2. Interacts with CNIH4. Interacts with S100A4; this interaction stimulates T-lymphocyte chemotaxis. In terms of processing, sulfated on at least 2 of the N-terminal tyrosines. Sulfation is required for efficient binding of the chemokines, CCL3 and CCL4. Post-translationally, palmitoylation in the C-terminal is important for cell surface expression. Phosphorylation on serine residues in the C-terminal is stimulated by binding CC chemokines especially by APO-RANTES. In terms of processing, O-glycosylated, but not N-glycosylated. Ser-6 appears to be the major site even if Ser-7 may be also O-glycosylated. Also sialylated glycans present which contribute to chemokine binding. Thr-16 and Ser-17 may also be glycosylated and, if so, with small moieties such as a T-antigen.

Its subcellular location is the cell membrane. Functionally, receptor for a number of inflammatory CC-chemokines including CCL3/MIP-1-alpha, CCL4/MIP-1-beta and RANTES and subsequently transduces a signal by increasing the intracellular calcium ion level. May play a role in the control of granulocytic lineage proliferation or differentiation. Participates in T-lymphocyte migration to the infection site by acting as a chemotactic receptor. The chain is C-C chemokine receptor type 5 (CCR5) from Allochrocebus solatus (Sun-tailed monkey).